We begin with the raw amino-acid sequence, 120 residues long: NAD(P)H-quinone oxidoreductase subunit 3, chloroplastic (120 aa).

3 helical membrane passes run 9-29, 64-84, and 88-108; these read IFWA…FISG, MFAL…PWAM, and VLGV…IVGL.

It belongs to the complex I subunit 3 family. NDH is composed of at least 16 different subunits, 5 of which are encoded in the nucleus.

The protein localises to the plastid. It localises to the chloroplast thylakoid membrane. It catalyses the reaction a plastoquinone + NADH + (n+1) H(+)(in) = a plastoquinol + NAD(+) + n H(+)(out). The catalysed reaction is a plastoquinone + NADPH + (n+1) H(+)(in) = a plastoquinol + NADP(+) + n H(+)(out). Functionally, NDH shuttles electrons from NAD(P)H:plastoquinone, via FMN and iron-sulfur (Fe-S) centers, to quinones in the photosynthetic chain and possibly in a chloroplast respiratory chain. The immediate electron acceptor for the enzyme in this species is believed to be plastoquinone. Couples the redox reaction to proton translocation, and thus conserves the redox energy in a proton gradient. In Guizotia abyssinica (Niger), this protein is NAD(P)H-quinone oxidoreductase subunit 3, chloroplastic.